Reading from the N-terminus, the 158-residue chain is Large ribosomal subunit protein uL16 (158 aa).

It belongs to the universal ribosomal protein uL16 family. In terms of assembly, part of the 50S ribosomal subunit.

Binds 23S rRNA and is also seen to make contacts with the A and possibly P site tRNAs. The polypeptide is Large ribosomal subunit protein uL16 (Synechococcus sp. (strain CC9605)).